A 65-amino-acid chain; its full sequence is Large ribosomal subunit protein uL29 (65 aa).

It belongs to the universal ribosomal protein uL29 family.

This Paracidovorax citrulli (strain AAC00-1) (Acidovorax citrulli) protein is Large ribosomal subunit protein uL29.